Consider the following 320-residue polypeptide: o-succinylbenzoate synthase (320 aa).

The Proton donor role is filled by K133. Mg(2+) contacts are provided by D161, E190, and D213. Residue K235 is the Proton acceptor of the active site.

The protein belongs to the mandelate racemase/muconate lactonizing enzyme family. MenC type 1 subfamily. A divalent metal cation is required as a cofactor.

It carries out the reaction (1R,6R)-6-hydroxy-2-succinyl-cyclohexa-2,4-diene-1-carboxylate = 2-succinylbenzoate + H2O. It participates in quinol/quinone metabolism; 1,4-dihydroxy-2-naphthoate biosynthesis; 1,4-dihydroxy-2-naphthoate from chorismate: step 4/7. It functions in the pathway quinol/quinone metabolism; menaquinone biosynthesis. In terms of biological role, converts 2-succinyl-6-hydroxy-2,4-cyclohexadiene-1-carboxylate (SHCHC) to 2-succinylbenzoate (OSB). The chain is o-succinylbenzoate synthase from Escherichia coli O9:H4 (strain HS).